A 219-amino-acid polypeptide reads, in one-letter code: 3,4-dihydroxy-2-butanone 4-phosphate synthase (219 aa).

D-ribulose 5-phosphate-binding positions include 37–38 (RE), aspartate 42, 150–154 (RRGHT), and glutamate 174. Glutamate 38 lines the Mg(2+) pocket. Position 153 (histidine 153) interacts with Mg(2+).

Belongs to the DHBP synthase family. As to quaternary structure, homodimer. The cofactor is Mg(2+). Mn(2+) is required as a cofactor.

It carries out the reaction D-ribulose 5-phosphate = (2S)-2-hydroxy-3-oxobutyl phosphate + formate + H(+). Its pathway is cofactor biosynthesis; riboflavin biosynthesis; 2-hydroxy-3-oxobutyl phosphate from D-ribulose 5-phosphate: step 1/1. Catalyzes the conversion of D-ribulose 5-phosphate to formate and 3,4-dihydroxy-2-butanone 4-phosphate. The sequence is that of 3,4-dihydroxy-2-butanone 4-phosphate synthase from Oleidesulfovibrio alaskensis (strain ATCC BAA-1058 / DSM 17464 / G20) (Desulfovibrio alaskensis).